The primary structure comprises 132 residues: Ribosome-binding factor A (132 aa).

It belongs to the RbfA family. In terms of assembly, monomer. Binds 30S ribosomal subunits, but not 50S ribosomal subunits or 70S ribosomes.

The protein localises to the cytoplasm. Its function is as follows. One of several proteins that assist in the late maturation steps of the functional core of the 30S ribosomal subunit. Associates with free 30S ribosomal subunits (but not with 30S subunits that are part of 70S ribosomes or polysomes). Required for efficient processing of 16S rRNA. May interact with the 5'-terminal helix region of 16S rRNA. In Burkholderia cenocepacia (strain ATCC BAA-245 / DSM 16553 / LMG 16656 / NCTC 13227 / J2315 / CF5610) (Burkholderia cepacia (strain J2315)), this protein is Ribosome-binding factor A.